A 346-amino-acid polypeptide reads, in one-letter code: Anthranilate phosphoribosyltransferase (346 aa).

Residues G81, G84–D85, N91–T94, K109–S117, and S121 each bind 5-phospho-alpha-D-ribose 1-diphosphate. G81 is an anthranilate binding site. S93 contacts Mg(2+). An anthranilate-binding site is contributed by R167. Mg(2+) is bound by residues D226 and E227.

This sequence belongs to the anthranilate phosphoribosyltransferase family. As to quaternary structure, homodimer. Mg(2+) is required as a cofactor.

It carries out the reaction N-(5-phospho-beta-D-ribosyl)anthranilate + diphosphate = 5-phospho-alpha-D-ribose 1-diphosphate + anthranilate. Its pathway is amino-acid biosynthesis; L-tryptophan biosynthesis; L-tryptophan from chorismate: step 2/5. Its function is as follows. Catalyzes the transfer of the phosphoribosyl group of 5-phosphorylribose-1-pyrophosphate (PRPP) to anthranilate to yield N-(5'-phosphoribosyl)-anthranilate (PRA). This is Anthranilate phosphoribosyltransferase from Marinomonas sp. (strain MWYL1).